A 29-amino-acid chain; its full sequence is Cyclotide mobo-A (29 aa).

A cross-link (cyclopeptide (Gly-Asn)) is located at residues 1-29 (GFPTCGETCTLGTCNTPGCTCSWPICTRN). Disulfide bonds link Cys-5/Cys-19, Cys-9/Cys-21, and Cys-14/Cys-26.

It belongs to the cyclotide family. Moebius subfamily. Post-translationally, this is a cyclic peptide.

Functionally, probably participates in a plant defense mechanism. This is Cyclotide mobo-A from Melicytus obovatus (Hymenanthera obovata).